Here is a 115-residue protein sequence, read N- to C-terminus: MGSHMTGENGQLALLDITVEFTGGLEMLFSNQRKHKISLPSLDITGAPSNIAYLIKYLCQNLMKDERKELFVLDDSVRPGILVLINDADWELEGEEQYRIQQNDNILFVSTLHGG.

Position 115 is a 1-thioglycine (glycine 115). Glycine 115 is covalently cross-linked (Glycyl lysine isopeptide (Gly-Lys) (interchain with K-? in acceptor proteins)).

The protein belongs to the URM1 family. Post-translationally, C-terminal thiocarboxylation occurs in 2 steps, it is first acyl-adenylated (-COAMP) via the hesA/moeB/thiF part of UBA4, then thiocarboxylated (-COSH) via the rhodanese domain of UBA4.

It is found in the cytoplasm. Its pathway is tRNA modification; 5-methoxycarbonylmethyl-2-thiouridine-tRNA biosynthesis. Acts as a sulfur carrier required for 2-thiolation of mcm(5)S(2)U at tRNA wobble positions of cytosolic tRNA(Lys), tRNA(Glu) and tRNA(Gln). Serves as sulfur donor in tRNA 2-thiolation reaction by being thiocarboxylated (-COSH) at its C-terminus by the MOCS3 homolog UBA4. The sulfur is then transferred to tRNA to form 2-thiolation of mcm(5)S(2)U. Prior mcm(5) tRNA modification by the elongator complex is required for 2-thiolation. Also acts as a ubiquitin-like protein (UBL) that is covalently conjugated via an isopeptide bond to lysine residues of target proteins such as AHP1. The thiocarboxylated form serves as substrate for conjugation and oxidative stress specifically induces the formation of UBL-protein conjugates. This is Ubiquitin-related modifier 1 from Coccidioides immitis (strain RS) (Valley fever fungus).